A 171-amino-acid chain; its full sequence is Plastocyanin minor isoform, chloroplastic (171 aa).

The Plastocyanin-like domain maps to 73–171; that stretch reads MEVLLGSDDG…AGMVGKLTVK (99 aa). Residues His-109, Cys-156, His-159, and Met-164 each coordinate Cu cation.

Belongs to the plastocyanin family. Requires Cu(2+) as cofactor.

The protein localises to the plastid. It is found in the chloroplast thylakoid membrane. Participates in electron transfer between P700 and the cytochrome b6-f complex in photosystem I. Seems to be a minor plastocyanin in Arabidopsis. The polypeptide is Plastocyanin minor isoform, chloroplastic (PETE) (Arabidopsis thaliana (Mouse-ear cress)).